A 179-amino-acid polypeptide reads, in one-letter code: Large ribosomal subunit protein uL5 (179 aa).

This sequence belongs to the universal ribosomal protein uL5 family. Part of the 50S ribosomal subunit; part of the 5S rRNA/L5/L18/L25 subcomplex. Contacts the 5S rRNA and the P site tRNA. Forms a bridge to the 30S subunit in the 70S ribosome.

In terms of biological role, this is one of the proteins that bind and probably mediate the attachment of the 5S RNA into the large ribosomal subunit, where it forms part of the central protuberance. In the 70S ribosome it contacts protein S13 of the 30S subunit (bridge B1b), connecting the 2 subunits; this bridge is implicated in subunit movement. Contacts the P site tRNA; the 5S rRNA and some of its associated proteins might help stabilize positioning of ribosome-bound tRNAs. The sequence is that of Large ribosomal subunit protein uL5 from Ectopseudomonas mendocina (strain ymp) (Pseudomonas mendocina).